A 210-amino-acid polypeptide reads, in one-letter code: Thymidylate kinase (210 aa).

11–18 (GLEGAGKS) lines the ATP pocket.

Belongs to the thymidylate kinase family.

It carries out the reaction dTMP + ATP = dTDP + ADP. In terms of biological role, phosphorylation of dTMP to form dTDP in both de novo and salvage pathways of dTTP synthesis. This is Thymidylate kinase from Histophilus somni (strain 129Pt) (Haemophilus somnus).